The chain runs to 236 residues: (5-formylfuran-3-yl)methyl phosphate synthase (236 aa).

Catalysis depends on K27, which acts as the Schiff-base intermediate with substrate. K85 serves as the catalytic Proton acceptor.

It belongs to the MfnB family.

It catalyses the reaction 2 D-glyceraldehyde 3-phosphate = 4-(hydroxymethyl)-2-furancarboxaldehyde phosphate + phosphate + 2 H2O. Its pathway is cofactor biosynthesis; methanofuran biosynthesis. Catalyzes the formation of 4-(hydroxymethyl)-2-furancarboxaldehyde phosphate (4-HFC-P) from two molecules of glyceraldehyde-3-P (GA-3-P). The protein is (5-formylfuran-3-yl)methyl phosphate synthase of Methanococcus maripaludis (strain C5 / ATCC BAA-1333).